The chain runs to 225 residues: 7-cyano-7-deazaguanine synthase (225 aa).

9-19 (YSGGLDSTTCL) contacts ATP. Zn(2+)-binding residues include cysteine 188, cysteine 198, cysteine 201, and cysteine 204.

The protein belongs to the QueC family. Requires Zn(2+) as cofactor.

The enzyme catalyses 7-carboxy-7-deazaguanine + NH4(+) + ATP = 7-cyano-7-deazaguanine + ADP + phosphate + H2O + H(+). Its pathway is purine metabolism; 7-cyano-7-deazaguanine biosynthesis. Catalyzes the ATP-dependent conversion of 7-carboxy-7-deazaguanine (CDG) to 7-cyano-7-deazaguanine (preQ(0)). The sequence is that of 7-cyano-7-deazaguanine synthase from Citrifermentans bemidjiense (strain ATCC BAA-1014 / DSM 16622 / JCM 12645 / Bem) (Geobacter bemidjiensis).